Consider the following 330-residue polypeptide: AH receptor-interacting protein (330 aa).

Ser43 carries the phosphoserine modification. In terms of domain architecture, PPIase FKBP-type spans 54 to 146 (RVRGKPMELI…DLDALQQNPQ (93 aa)). 3 TPR repeats span residues 179–212 (VPLI…LKNL), 231–264 (TPLL…YDDN), and 265–298 (VKAY…DPAL).

As to quaternary structure, interacts with RET in the pituitary gland; this interaction prevents the formation of the AIP-survivin complex.

The protein resides in the cytoplasm. Functionally, may play a positive role in AHR-mediated (aromatic hydrocarbon receptor) signaling, possibly by influencing its receptivity for ligand and/or its nuclear targeting. In terms of biological role, cellular negative regulator of the hepatitis B virus (HBV) X protein. The sequence is that of AH receptor-interacting protein (AIP) from Chlorocebus aethiops (Green monkey).